Here is a 78-residue protein sequence, read N- to C-terminus: Small ribosomal subunit protein bS18 (78 aa).

The protein belongs to the bacterial ribosomal protein bS18 family. In terms of assembly, part of the 30S ribosomal subunit. Forms a tight heterodimer with protein bS6.

Functionally, binds as a heterodimer with protein bS6 to the central domain of the 16S rRNA, where it helps stabilize the platform of the 30S subunit. This chain is Small ribosomal subunit protein bS18, found in Lactobacillus johnsonii (strain CNCM I-12250 / La1 / NCC 533).